Consider the following 446-residue polypeptide: 3',5'-cyclic-AMP phosphodiesterase 7B (446 aa).

In terms of domain architecture, PDEase spans 97-420; it reads LDEDYLGQAR…AQWKSLLSNQ (324 aa). Catalysis depends on H173, which acts as the Proton donor. 4 residues coordinate a divalent metal cation: H177, H213, D214, and D323. The tract at residues 422–446 is disordered; the sequence is RRRGSGQDLAGPAPETLEQTEGATP. S426 is subject to Phosphoserine. Position 445 is a phosphothreonine (T445).

The protein belongs to the cyclic nucleotide phosphodiesterase family. PDE7 subfamily. Requires a divalent metal cation as cofactor. Highly expressed in brain.

It catalyses the reaction 3',5'-cyclic AMP + H2O = AMP + H(+). It participates in purine metabolism; 3',5'-cyclic AMP degradation; AMP from 3',5'-cyclic AMP: step 1/1. Inhibited by dipyridamole, IBMX and SCH 51866. Insensitive to zaprinast, rolipram, and milrinone. Its function is as follows. Hydrolyzes the second messenger cAMP, which is a key regulator of many important physiological processes. May be involved in the control of cAMP-mediated neural activity and cAMP metabolism in the brain. This Mus musculus (Mouse) protein is 3',5'-cyclic-AMP phosphodiesterase 7B.